The chain runs to 232 residues: Ribonuclease P protein component 3 (232 aa).

It belongs to the eukaryotic/archaeal RNase P protein component 3 family. In terms of assembly, consists of a catalytic RNA component and at least 4-5 protein subunits.

It localises to the cytoplasm. It catalyses the reaction Endonucleolytic cleavage of RNA, removing 5'-extranucleotides from tRNA precursor.. Part of ribonuclease P, a protein complex that generates mature tRNA molecules by cleaving their 5'-ends. This is Ribonuclease P protein component 3 from Methanococcus maripaludis (strain C6 / ATCC BAA-1332).